Reading from the N-terminus, the 357-residue chain is 4-hydroxymandelate synthase (357 aa).

VOC domains lie at Glu-5–Arg-129 and Gly-158–Ala-309. His-161 contributes to the Fe cation binding site. Residues His-161, Ser-201, Thr-214, His-241, and Gln-305 each coordinate substrate. His-241 serves as a coordination point for Fe cation. Glu-320 contributes to the Fe cation binding site.

It belongs to the 4HPPD family. In terms of assembly, monomer. The cofactor is Fe cation.

The catalysed reaction is 3-(4-hydroxyphenyl)pyruvate + O2 = (S)-4-hydroxymandelate + CO2. The protein operates within antibiotic biosynthesis; vancomycin biosynthesis. Its function is as follows. Required to synthesize hydroxyphenylglycine, a recurring skeletal component of nonproteinogenic macrocyclic peptide antibiotics such as vancomycin. Catalyzes the conversion of p-hydroxyphenylpyruvate to p-hydroxymandelate. The decarboxylation and hydroxylation activities of HmaS show novel and distinct regioselectivity, compared to all other known p-hydroxyphenylpyruvate dioxygenases, by hydroxylating the benzylic position of the substrate instead of the phenyl ring. The chain is 4-hydroxymandelate synthase from Amycolatopsis orientalis (Nocardia orientalis).